We begin with the raw amino-acid sequence, 232 residues long: Ras association domain-containing protein 3 (232 aa).

N-acetylserine is present on Ser2. The segment at 25–46 (RAPPGKSRSGQPDVEKEKETHN) is disordered. The span at 37–46 (DVEKEKETHN) shows a compositional bias: basic and acidic residues. In terms of domain architecture, Ras-associating spans 78-180 (YTGFIKVQME…TLSFVLREHE (103 aa)). Residues 181–228 (IGEWEAFSLPELQNFLRILDKEEDEQLQSLKRRYTAYRQKLEEALGEV) enclose the SARAH domain.

It is found in the cytoplasm. Its subcellular location is the cytoskeleton. The sequence is that of Ras association domain-containing protein 3 (Rassf3) from Mus musculus (Mouse).